We begin with the raw amino-acid sequence, 280 residues long: Bifunctional protein FolD (280 aa).

NADP(+) contacts are provided by residues 166-168 and Ser-191; that span reads GRS.

This sequence belongs to the tetrahydrofolate dehydrogenase/cyclohydrolase family. As to quaternary structure, homodimer.

The catalysed reaction is (6R)-5,10-methylene-5,6,7,8-tetrahydrofolate + NADP(+) = (6R)-5,10-methenyltetrahydrofolate + NADPH. It catalyses the reaction (6R)-5,10-methenyltetrahydrofolate + H2O = (6R)-10-formyltetrahydrofolate + H(+). Its pathway is one-carbon metabolism; tetrahydrofolate interconversion. Its function is as follows. Catalyzes the oxidation of 5,10-methylenetetrahydrofolate to 5,10-methenyltetrahydrofolate and then the hydrolysis of 5,10-methenyltetrahydrofolate to 10-formyltetrahydrofolate. This is Bifunctional protein FolD from Cellvibrio japonicus (strain Ueda107) (Pseudomonas fluorescens subsp. cellulosa).